A 524-amino-acid polypeptide reads, in one-letter code: Bifunctional purine biosynthesis protein PurH (524 aa).

The 144-residue stretch at 1–144 (MTRRALVSVS…KNSAHVGVVV (144 aa)) folds into the MGS-like domain.

Belongs to the PurH family.

The catalysed reaction is (6R)-10-formyltetrahydrofolate + 5-amino-1-(5-phospho-beta-D-ribosyl)imidazole-4-carboxamide = 5-formamido-1-(5-phospho-D-ribosyl)imidazole-4-carboxamide + (6S)-5,6,7,8-tetrahydrofolate. The enzyme catalyses IMP + H2O = 5-formamido-1-(5-phospho-D-ribosyl)imidazole-4-carboxamide. It participates in purine metabolism; IMP biosynthesis via de novo pathway; 5-formamido-1-(5-phospho-D-ribosyl)imidazole-4-carboxamide from 5-amino-1-(5-phospho-D-ribosyl)imidazole-4-carboxamide (10-formyl THF route): step 1/1. The protein operates within purine metabolism; IMP biosynthesis via de novo pathway; IMP from 5-formamido-1-(5-phospho-D-ribosyl)imidazole-4-carboxamide: step 1/1. This is Bifunctional purine biosynthesis protein PurH from Anaeromyxobacter sp. (strain K).